A 259-amino-acid chain; its full sequence is Tryptophan synthase alpha chain (259 aa).

Catalysis depends on proton acceptor residues glutamate 35 and aspartate 46.

This sequence belongs to the TrpA family. Tetramer of two alpha and two beta chains.

The catalysed reaction is (1S,2R)-1-C-(indol-3-yl)glycerol 3-phosphate + L-serine = D-glyceraldehyde 3-phosphate + L-tryptophan + H2O. Its pathway is amino-acid biosynthesis; L-tryptophan biosynthesis; L-tryptophan from chorismate: step 5/5. In terms of biological role, the alpha subunit is responsible for the aldol cleavage of indoleglycerol phosphate to indole and glyceraldehyde 3-phosphate. In Methanococcus maripaludis (strain C5 / ATCC BAA-1333), this protein is Tryptophan synthase alpha chain.